The sequence spans 154 residues: Transcriptional repressor NrdR (154 aa).

The tract at residues Met-1–Gly-22 is disordered. Residues Cys-3–Cys-34 fold into a zinc finger. A compositionally biased stretch (basic and acidic residues) spans Ala-7–Gly-22. Residues Met-49–Asp-139 form the ATP-cone domain.

Belongs to the NrdR family. The cofactor is Zn(2+).

Functionally, negatively regulates transcription of bacterial ribonucleotide reductase nrd genes and operons by binding to NrdR-boxes. In Rhizorhabdus wittichii (strain DSM 6014 / CCUG 31198 / JCM 15750 / NBRC 105917 / EY 4224 / RW1) (Sphingomonas wittichii), this protein is Transcriptional repressor NrdR.